Consider the following 149-residue polypeptide: Probable flagellum biosynthesis repressor protein FlbT (149 aa).

The protein belongs to the FlbT family.

Functionally, has a post-transcriptional repressor function in flagellum biogenesis. Associates with the 5'-UTR of fljK mRNA and promotes its degradation. The chain is Probable flagellum biosynthesis repressor protein FlbT from Agrobacterium fabrum (strain C58 / ATCC 33970) (Agrobacterium tumefaciens (strain C58)).